The primary structure comprises 145 residues: Pseudoazurin (145 aa).

An N-terminal signal peptide occupies residues 1-22 (MFHHSLAAAAAALLALAAPGFA). Positions 27–115 (VHMLNKGESG…MGMVGLVQVG (89 aa)) constitute a Plastocyanin-like domain. Residues H62, C100, H103, and M108 each contribute to the Cu cation site. The segment at 126 to 145 (TAKMPKKARERMDAELAQVN) is disordered.

In terms of assembly, homodimer. The cofactor is Cu cation.

Its subcellular location is the periplasm. In terms of biological role, this soluble electron transfer copper protein is required for the inactivation of copper-containing nitrite reductase in the presence of oxygen. The protein is Pseudoazurin (pazS) of Paracoccus pantotrophus (Thiosphaera pantotropha).